Here is a 305-residue protein sequence, read N- to C-terminus: UPF0612 protein C337.02c (305 aa).

Coiled coils occupy residues 27-63 (IERY…MKYE) and 120-207 (NDMN…DARS).

This sequence belongs to the UPF0612 family.

This Schizosaccharomyces pombe (strain 972 / ATCC 24843) (Fission yeast) protein is UPF0612 protein C337.02c.